The following is a 461-amino-acid chain: MVRSEWIAARKGHDNVTQMHYARQGIITEEMHYVAQRENLPPELIRDEVARGRMIIPANINHPNLEPMAIGIAAKCKVNANIGASPNSSNLEEELAKLRLAVKYGADTVMDLSTGGGDLDAIRTAIINASPVPIGTVPVYQALESVHGSVERLTPDDFLHVIEKHAQQGVDYMTIHAGLLIEYLPLVKNRITGIVSRGGGILAKWMLYHHKQNPLYTHFRDIIEIFKKYDVSFSLGDSLRPGCLHDASDEAQLAELKTLGQLTRKAWEHDVQVMVEGPGHVPMDQIEFNVRKQMEECSEAPFYVLGPLVTDIAPGYDHITSAIGAALAGWYGTAMLCYVTPKEHLGLPNAEDVRNGLIAYKIAAHAADIARHRPGARDRDDELSRARYNFDWNRQFELALDPERAREYHDETLPADIYKTAEFCSMCGPKFCPMQTKVDAEALAELEKFLAKDKDQVSASA.

Substrate is bound by residues asparagine 81, methionine 110, tyrosine 140, histidine 176, 196-198, 237-240, and glutamate 276; these read SRG and DSLR. Histidine 280 contributes to the Zn(2+) binding site. Tyrosine 303 is a substrate binding site. Residue histidine 344 coordinates Zn(2+). Residues cysteine 424, cysteine 427, and cysteine 432 each coordinate [4Fe-4S] cluster.

Belongs to the ThiC family. The cofactor is [4Fe-4S] cluster.

The catalysed reaction is 5-amino-1-(5-phospho-beta-D-ribosyl)imidazole + S-adenosyl-L-methionine = 4-amino-2-methyl-5-(phosphooxymethyl)pyrimidine + CO + 5'-deoxyadenosine + formate + L-methionine + 3 H(+). It participates in cofactor biosynthesis; thiamine diphosphate biosynthesis. Its function is as follows. Catalyzes the synthesis of the hydroxymethylpyrimidine phosphate (HMP-P) moiety of thiamine from aminoimidazole ribotide (AIR) in a radical S-adenosyl-L-methionine (SAM)-dependent reaction. The polypeptide is Phosphomethylpyrimidine synthase (Thermosynechococcus vestitus (strain NIES-2133 / IAM M-273 / BP-1)).